We begin with the raw amino-acid sequence, 179 residues long: Bifunctional protein PyrR (179 aa).

A PRPP-binding motif is present at residues 99–111; the sequence is VILVDDVLYTGRT.

This sequence belongs to the purine/pyrimidine phosphoribosyltransferase family. PyrR subfamily. Homodimer and homohexamer; in equilibrium.

The enzyme catalyses UMP + diphosphate = 5-phospho-alpha-D-ribose 1-diphosphate + uracil. In terms of biological role, regulates transcriptional attenuation of the pyrimidine nucleotide (pyr) operon by binding in a uridine-dependent manner to specific sites on pyr mRNA. This disrupts an antiterminator hairpin in the RNA and favors formation of a downstream transcription terminator, leading to a reduced expression of downstream genes. Also displays a weak uracil phosphoribosyltransferase activity which is not physiologically significant. This is Bifunctional protein PyrR from Limosilactobacillus fermentum (strain NBRC 3956 / LMG 18251) (Lactobacillus fermentum).